The following is a 208-amino-acid chain: Small ribosomal subunit protein uS4 (208 aa).

The S4 RNA-binding domain maps to 98 to 159 (LRLDNVVFRL…RSKKVVRITE (62 aa)).

This sequence belongs to the universal ribosomal protein uS4 family. In terms of assembly, part of the 30S ribosomal subunit. Contacts protein S5. The interaction surface between S4 and S5 is involved in control of translational fidelity.

Functionally, one of the primary rRNA binding proteins, it binds directly to 16S rRNA where it nucleates assembly of the body of the 30S subunit. With S5 and S12 plays an important role in translational accuracy. The protein is Small ribosomal subunit protein uS4 of Anaeromyxobacter dehalogenans (strain 2CP-1 / ATCC BAA-258).